We begin with the raw amino-acid sequence, 702 residues long: Phosphatase and actin regulator 4 (702 aa).

Disordered regions lie at residues 1 to 37, 72 to 194, and 222 to 363; these read MEDP…KSKF, RKPR…SSGG, and NLSV…PFPA. The stretch at 63 to 88 is one RPEL 1 repeat; sequence EVLERKISMRKPREELVKRGVLLEDP. Basic and acidic residues predominate over residues 72 to 84; sequence RKPREELVKRGVL. Residues 106 to 120 show a composition bias toward polar residues; it reads GHTTPIGNARSSSPV. 4 positions are modified to phosphoserine: serine 116, serine 118, serine 131, and serine 147. Polar residues predominate over residues 147–156; sequence STGSQPNSEA. Over residues 163-173 the composition is skewed to pro residues; that stretch reads VPKPPLLPPKR. Positions 233–250 are enriched in low complexity; sequence TLPAAPASTNTTATPSLT. Phosphoserine is present on residues serine 270 and serine 291. The span at 301–318 shows a compositional bias: polar residues; it reads PSTSVPTLESAAAITTKT. A phosphoserine mark is found at serine 342 and serine 344. A compositionally biased stretch (pro residues) spans 342–362; sequence SPSPPLPTHIPPEPPRTPPFP. Threonine 358 carries the phosphothreonine modification. Serine 427 bears the Phosphoserine mark. Phosphothreonine is present on threonine 432. Phosphoserine is present on residues serine 443, serine 453, and serine 464. The interval 469 to 536 is disordered; that stretch reads IEMLKVPDDE…EEDEDESYQS (68 aa). A compositionally biased stretch (polar residues) spans 484–497; that stretch reads TCPSTFSEEMTPTS. Over residues 508-518 the composition is skewed to acidic residues; the sequence is EEEEKESDSDS. 4 positions are modified to phosphoserine: serine 514, serine 516, serine 557, and serine 590. 2 RPEL repeats span residues 583-608 and 621-646; these read NTLI…QPKN and RRLT…RFNE. A disordered region spans residues 592–615; it reads RPTPEELEQRNILQPKNEADRQAE. Serine 628 carries the post-translational modification Phosphoserine.

Belongs to the phosphatase and actin regulator family. As to quaternary structure, binds PPP1CA and actin.

It localises to the cytoplasm. The protein localises to the cell projection. The protein resides in the lamellipodium. Regulator of protein phosphatase 1 (PP1) required for neural tube and optic fissure closure, and enteric neural crest cell (ENCCs) migration during development. Acts as an activator of PP1 by interacting with PPP1CA and preventing phosphorylation of PPP1CA at 'Thr-320'. During neural tube closure, localizes to the ventral neural tube and activates PP1, leading to down-regulate cell proliferation within cranial neural tissue and the neural retina. Also acts as a regulator of migration of enteric neural crest cells (ENCCs) by activating PP1, leading to dephosphorylation and subsequent activation of cofilin (COF1 or COF2) and repression of the integrin signaling through the RHO/ROCK pathway. This Homo sapiens (Human) protein is Phosphatase and actin regulator 4 (PHACTR4).